The sequence spans 210 residues: Large ribosomal subunit protein bL9 (210 aa).

The disordered stretch occupies residues 172–210 (EAAAAALEPDSEEEFEAATPPSELAAEASDEDADDAKEA). The segment covering 199 to 210 (ASDEDADDAKEA) has biased composition (acidic residues).

This sequence belongs to the bacterial ribosomal protein bL9 family.

In terms of biological role, binds to the 23S rRNA. The protein is Large ribosomal subunit protein bL9 of Sphingopyxis alaskensis (strain DSM 13593 / LMG 18877 / RB2256) (Sphingomonas alaskensis).